A 278-amino-acid polypeptide reads, in one-letter code: Thiazole synthase (278 aa).

K109 (schiff-base intermediate with DXP) is an active-site residue. Residues G170, 197-198, and 219-220 contribute to the 1-deoxy-D-xylulose 5-phosphate site; these read AG and NT.

This sequence belongs to the ThiG family. As to quaternary structure, homotetramer. Forms heterodimers with either ThiH or ThiS.

The protein resides in the cytoplasm. It carries out the reaction [ThiS sulfur-carrier protein]-C-terminal-Gly-aminoethanethioate + 2-iminoacetate + 1-deoxy-D-xylulose 5-phosphate = [ThiS sulfur-carrier protein]-C-terminal Gly-Gly + 2-[(2R,5Z)-2-carboxy-4-methylthiazol-5(2H)-ylidene]ethyl phosphate + 2 H2O + H(+). It participates in cofactor biosynthesis; thiamine diphosphate biosynthesis. Its function is as follows. Catalyzes the rearrangement of 1-deoxy-D-xylulose 5-phosphate (DXP) to produce the thiazole phosphate moiety of thiamine. Sulfur is provided by the thiocarboxylate moiety of the carrier protein ThiS. In vitro, sulfur can be provided by H(2)S. In Cupriavidus pinatubonensis (strain JMP 134 / LMG 1197) (Cupriavidus necator (strain JMP 134)), this protein is Thiazole synthase.